Here is a 268-residue protein sequence, read N- to C-terminus: Trypsin-like protease (268 aa).

The first 41 residues, 1 to 41 (MTHTTTIAAKRGGLALAKKAAAAGAVALAVASLQPVSAAHA), serve as a signal peptide directing secretion. A propeptide spans 42–45 (ADAR) (activation peptide). In terms of domain architecture, Peptidase S1 spans 46-266 (VIGGKPAAQN…FAKDIAKAAS (221 aa)). Cys67 and Cys83 form a disulfide bridge. Active-site charge relay system residues include His82 and Asp127. Disulfide bonds link Cys187-Cys202 and Cys213-Cys242. Catalysis depends on Ser217, which acts as the Charge relay system.

Belongs to the peptidase S1 family.

Protease that shows preferential cleavage after Arg and Lys residues. The chain is Trypsin-like protease from Streptomyces glaucescens.